We begin with the raw amino-acid sequence, 392 residues long: Xylose operon regulatory protein (392 aa).

The HTH araC/xylS-type domain occupies 288 to 386 (IQAMHYIRNH…DTTPKEYRDV (99 aa)). 2 consecutive DNA-binding regions (H-T-H motif) follow at residues 305 to 326 (DQVL…KEEV) and 353 to 376 (INEI…KKAY).

Its function is as follows. Regulatory protein for the xylBAFGHR operon. This chain is Xylose operon regulatory protein (xylR), found in Escherichia coli O157:H7.